The primary structure comprises 904 residues: Phosphoenolpyruvate carboxylase (904 aa).

Catalysis depends on residues His151 and Lys570.

Belongs to the PEPCase type 1 family. Mg(2+) is required as a cofactor.

The catalysed reaction is oxaloacetate + phosphate = phosphoenolpyruvate + hydrogencarbonate. Functionally, forms oxaloacetate, a four-carbon dicarboxylic acid source for the tricarboxylic acid cycle. This is Phosphoenolpyruvate carboxylase from Xanthomonas campestris pv. campestris (strain 8004).